We begin with the raw amino-acid sequence, 111 residues long: Universal stress protein B (111 aa).

Transmembrane regions (helical) follow at residues 1-21 (MINT…NMLR) and 90-110 (FILT…LMLW).

This sequence belongs to the universal stress protein B family.

It localises to the cell inner membrane. This chain is Universal stress protein B, found in Edwardsiella ictaluri (strain 93-146).